Reading from the N-terminus, the 425-residue chain is Enolase (425 aa).

Glutamine 162 lines the (2R)-2-phosphoglycerate pocket. Glutamate 204 acts as the Proton donor in catalysis. Mg(2+) is bound by residues aspartate 241, glutamate 282, and aspartate 309. (2R)-2-phosphoglycerate-binding residues include lysine 334, arginine 363, serine 364, and lysine 385. Lysine 334 acts as the Proton acceptor in catalysis.

It belongs to the enolase family. The cofactor is Mg(2+).

It localises to the cytoplasm. Its subcellular location is the secreted. It is found in the cell surface. It carries out the reaction (2R)-2-phosphoglycerate = phosphoenolpyruvate + H2O. It functions in the pathway carbohydrate degradation; glycolysis; pyruvate from D-glyceraldehyde 3-phosphate: step 4/5. Its function is as follows. Catalyzes the reversible conversion of 2-phosphoglycerate (2-PG) into phosphoenolpyruvate (PEP). It is essential for the degradation of carbohydrates via glycolysis. The chain is Enolase from Corynebacterium aurimucosum (strain ATCC 700975 / DSM 44827 / CIP 107346 / CN-1) (Corynebacterium nigricans).